A 112-amino-acid chain; its full sequence is UPF0342 protein STH1710 (112 aa).

This sequence belongs to the UPF0342 family.

This Symbiobacterium thermophilum (strain DSM 24528 / JCM 14929 / IAM 14863 / T) protein is UPF0342 protein STH1710.